The primary structure comprises 261 residues: Indole-3-glycerol phosphate synthase (261 aa).

The protein belongs to the TrpC family.

The enzyme catalyses 1-(2-carboxyphenylamino)-1-deoxy-D-ribulose 5-phosphate + H(+) = (1S,2R)-1-C-(indol-3-yl)glycerol 3-phosphate + CO2 + H2O. It participates in amino-acid biosynthesis; L-tryptophan biosynthesis; L-tryptophan from chorismate: step 4/5. This chain is Indole-3-glycerol phosphate synthase, found in Campylobacter hominis (strain ATCC BAA-381 / DSM 21671 / CCUG 45161 / LMG 19568 / NCTC 13146 / CH001A).